Reading from the N-terminus, the 468-residue chain is UDP-N-acetylmuramoyl-L-alanine--L-glutamate ligase (468 aa).

Gly-122–Thr-128 is a binding site for ATP.

This sequence belongs to the MurCDEF family. MurD2 subfamily.

The protein localises to the cytoplasm. It catalyses the reaction UDP-N-acetyl-alpha-D-muramoyl-L-alanine + L-glutamate + ATP = UDP-N-acetyl-alpha-D-muramoyl-L-alanyl-L-glutamate + ADP + phosphate + H(+). It participates in cell wall biogenesis; peptidoglycan biosynthesis. Its function is as follows. Cell wall formation. Catalyzes the addition of L-glutamate to the nucleotide precursor UDP-N-acetylmuramoyl-L-alanine. The protein is UDP-N-acetylmuramoyl-L-alanine--L-glutamate ligase of Xylella fastidiosa (strain Temecula1 / ATCC 700964).